Reading from the N-terminus, the 205-residue chain is Small ribosomal subunit protein uS4 (205 aa).

Residues 1–16 show a composition bias toward basic and acidic residues; it reads MSKRESSKYKIDRRMG. Residues 1–46 form a disordered region; it reads MSKRESSKYKIDRRMGENIWGRPKSPVNRREYGPGQHGQRRKSKLS. The S4 RNA-binding domain maps to 94–157; it reads SRLDAIVYRA…KQLVTVLEAV (64 aa).

Belongs to the universal ribosomal protein uS4 family. Part of the 30S ribosomal subunit. Contacts protein S5. The interaction surface between S4 and S5 is involved in control of translational fidelity.

In terms of biological role, one of the primary rRNA binding proteins, it binds directly to 16S rRNA where it nucleates assembly of the body of the 30S subunit. With S5 and S12 plays an important role in translational accuracy. The sequence is that of Small ribosomal subunit protein uS4 from Sinorhizobium medicae (strain WSM419) (Ensifer medicae).